A 357-amino-acid chain; its full sequence is tRNA-specific 2-thiouridylase MnmA (357 aa).

ATP contacts are provided by residues 7–14 and methionine 33; that span reads GMSGGVDS. Cysteine 103 serves as the catalytic Nucleophile. Residues cysteine 103 and cysteine 200 are joined by a disulfide bond. Glycine 127 lines the ATP pocket. Residues 150–152 are interaction with tRNA; it reads KDQ. Residue cysteine 200 is the Cysteine persulfide intermediate of the active site. Residues 306–307 are interaction with tRNA; the sequence is RY.

It belongs to the MnmA/TRMU family.

The protein resides in the cytoplasm. The enzyme catalyses S-sulfanyl-L-cysteinyl-[protein] + uridine(34) in tRNA + AH2 + ATP = 2-thiouridine(34) in tRNA + L-cysteinyl-[protein] + A + AMP + diphosphate + H(+). In terms of biological role, catalyzes the 2-thiolation of uridine at the wobble position (U34) of tRNA, leading to the formation of s(2)U34. In Lachnoclostridium phytofermentans (strain ATCC 700394 / DSM 18823 / ISDg) (Clostridium phytofermentans), this protein is tRNA-specific 2-thiouridylase MnmA.